The chain runs to 469 residues: Neuraminidase (469 aa).

Over 1–9 (MNPNQKIIT) the chain is Intravirion. Residues 10-30 (IGSVSLTIATVCFLMQIAILV) form a helical membrane-spanning segment. The interval 11 to 33 (GSVSLTIATVCFLMQIAILVTTV) is involved in apical transport and lipid raft association. Over 31–469 (TTVTLHFRQY…DGADINLMPI (439 aa)) the chain is Virion surface. The tract at residues 36–88 (HFRQYECDSPANNQVMPCEPTIIERNITEIVYLNNTTIEKEICPKLVEYRNWS) is hypervariable stalk region. N-linked (GlcNAc...) asparagine; by host glycans are attached at residues Asn-61, Asn-69, Asn-70, and Asn-86. The segment at 91–469 (QCKITGFAPF…DGADINLMPI (379 aa)) is head of neuraminidase. 8 cysteine pairs are disulfide-bonded: Cys-92/Cys-417, Cys-124/Cys-129, Cys-183/Cys-230, Cys-232/Cys-237, Cys-278/Cys-291, Cys-280/Cys-289, Cys-318/Cys-337, and Cys-421/Cys-447. Arg-118 provides a ligand contact to substrate. Asn-146 carries N-linked (GlcNAc...) asparagine; by host glycosylation. Asp-151 functions as the Proton donor/acceptor in the catalytic mechanism. Arg-152 contributes to the substrate binding site. N-linked (GlcNAc...) asparagine; by host glycans are attached at residues Asn-200 and Asn-234. 276-277 (EE) is a substrate binding site. Arg-292 lines the substrate pocket. Residues Asp-293, Gly-297, and Asp-324 each coordinate Ca(2+). The interval 323 to 350 (GDTPRNNDRSSNSNCRNPNNERGNHGVK) is disordered. The span at 331 to 343 (RSSNSNCRNPNNE) shows a compositional bias: low complexity. Arg-371 contributes to the substrate binding site. The N-linked (GlcNAc...) asparagine; by host glycan is linked to Asn-402. Residue Tyr-406 is the Nucleophile of the active site.

Belongs to the glycosyl hydrolase 34 family. In terms of assembly, homotetramer. It depends on Ca(2+) as a cofactor. In terms of processing, N-glycosylated.

It localises to the virion membrane. The protein localises to the host apical cell membrane. The catalysed reaction is Hydrolysis of alpha-(2-&gt;3)-, alpha-(2-&gt;6)-, alpha-(2-&gt;8)- glycosidic linkages of terminal sialic acid residues in oligosaccharides, glycoproteins, glycolipids, colominic acid and synthetic substrates.. With respect to regulation, inhibited by the neuraminidase inhibitors zanamivir (Relenza) and oseltamivir (Tamiflu). These drugs interfere with the release of progeny virus from infected cells and are effective against all influenza strains. Resistance to neuraminidase inhibitors is quite rare. In terms of biological role, catalyzes the removal of terminal sialic acid residues from viral and cellular glycoconjugates. Cleaves off the terminal sialic acids on the glycosylated HA during virus budding to facilitate virus release. Additionally helps virus spread through the circulation by further removing sialic acids from the cell surface. These cleavages prevent self-aggregation and ensure the efficient spread of the progeny virus from cell to cell. Otherwise, infection would be limited to one round of replication. Described as a receptor-destroying enzyme because it cleaves a terminal sialic acid from the cellular receptors. May facilitate viral invasion of the upper airways by cleaving the sialic acid moieties on the mucin of the airway epithelial cells. Likely to plays a role in the budding process through its association with lipid rafts during intracellular transport. May additionally display a raft-association independent effect on budding. Plays a role in the determination of host range restriction on replication and virulence. Sialidase activity in late endosome/lysosome traffic seems to enhance virus replication. The polypeptide is Neuraminidase (Aves (Human)).